The primary structure comprises 72 residues: Putative DNA-directed RNA polymerase subunit omega (72 aa).

Belongs to the RNA polymerase subunit omega family.

Its subcellular location is the plastid. It localises to the chloroplast. It catalyses the reaction RNA(n) + a ribonucleoside 5'-triphosphate = RNA(n+1) + diphosphate. May be involved in RNA polymerase activity. The chain is Putative DNA-directed RNA polymerase subunit omega (rpoZ) from Cyanidium caldarium (Red alga).